A 425-amino-acid chain; its full sequence is Enolase (425 aa).

Residue Gln-163 participates in (2R)-2-phosphoglycerate binding. The active-site Proton donor is Glu-205. The Mg(2+) site is built by Asp-242, Glu-285, and Asp-312. (2R)-2-phosphoglycerate contacts are provided by Lys-337, Arg-366, Ser-367, and Lys-388. Lys-337 functions as the Proton acceptor in the catalytic mechanism.

It belongs to the enolase family. Requires Mg(2+) as cofactor.

The protein resides in the cytoplasm. It is found in the secreted. It localises to the cell surface. It catalyses the reaction (2R)-2-phosphoglycerate = phosphoenolpyruvate + H2O. It functions in the pathway carbohydrate degradation; glycolysis; pyruvate from D-glyceraldehyde 3-phosphate: step 4/5. Catalyzes the reversible conversion of 2-phosphoglycerate (2-PG) into phosphoenolpyruvate (PEP). It is essential for the degradation of carbohydrates via glycolysis. This chain is Enolase, found in Rhodospirillum rubrum (strain ATCC 11170 / ATH 1.1.1 / DSM 467 / LMG 4362 / NCIMB 8255 / S1).